A 314-amino-acid polypeptide reads, in one-letter code: MLVSGRRRLLTALLQAQKWPFQPSRDMRLVQFRAPHLVGPHLGLETGNGGGVINLNAFDPTLPKTMTQFLEQGEATLSVARRALAAQLPVLPWSEVTFLAPVTWPDKVVCVGMNYVDHCKEQNVPVPKEPIIFSKFASSIVGPYDEVVLPPQSQEVDWEVELAVVIGKKGKHIKATDAMAHVAGFTVAHDVSARDWLTRRNGKQWLLGKTFDTFCPLGPALVTKDSVADPHNLKICCRVNGEVVQSSNTNQMVFKTEDLIAWVSQFVTFYPGDVILTGTPPGVGVFRKPPVFLKKGDEVQCEIEELGVIINKVV.

The N-terminal 84 residues, 1–84 (MLVSGRRRLL…ATLSVARRAL (84 aa)), are a transit peptide targeting the mitochondrion. Mg(2+) is bound by residues glutamate 159, glutamate 161, and aspartate 190.

It belongs to the FAH family. Mg(2+) is required as a cofactor. The cofactor is Mn(2+).

It is found in the mitochondrion. It carries out the reaction oxaloacetate = enol-oxaloacetate. Its function is as follows. Tautomerase that converts enol-oxaloacetate, a strong inhibitor of succinate dehydrogenase, to the physiological keto form of oxaloacetate. It is thereby required to maximize aerobic respiration efficiency by preventing succinate dehydrogenase inhibition. This Homo sapiens (Human) protein is Oxaloacetate tautomerase FAHD2B, mitochondrial.